The chain runs to 369 residues: tRNA-specific 2-thiouridylase MnmA (369 aa).

ATP is bound by residues G10 to S17 and L36. The active-site Nucleophile is the C97. C97 and C196 are joined by a disulfide. G122 is a binding site for ATP. The segment at K146–Q148 is interaction with tRNA. The active-site Cysteine persulfide intermediate is C196. The interval R301–Y302 is interaction with tRNA.

The protein belongs to the MnmA/TRMU family.

The protein localises to the cytoplasm. The enzyme catalyses S-sulfanyl-L-cysteinyl-[protein] + uridine(34) in tRNA + AH2 + ATP = 2-thiouridine(34) in tRNA + L-cysteinyl-[protein] + A + AMP + diphosphate + H(+). Functionally, catalyzes the 2-thiolation of uridine at the wobble position (U34) of tRNA, leading to the formation of s(2)U34. The sequence is that of tRNA-specific 2-thiouridylase MnmA from Thermosynechococcus vestitus (strain NIES-2133 / IAM M-273 / BP-1).